Consider the following 288-residue polypeptide: NAD(P)H quinone oxidoreductase YCP4 (288 aa).

Positions 3–192 (IAIIQYSTYG…EIAEKQGEAF (190 aa)) constitute a Flavodoxin-like domain. Residues 9-13 (STYGH) and 110-164 (VFVS…SPYG) each bind FMN. The tract at residues 202–288 (GSKKTNTTTT…KSSCSKCIIM (87 aa)) is disordered. Over residues 205-254 (KTNTTTTSKSAATSDAAGTTSGTAAGTSAATGAATGTSAPKESTKEASSS) the composition is skewed to low complexity. A compositionally biased stretch (polar residues) spans 261-288 (NGTATRTQQSTKAPETAEKSSCSKCIIM).

This sequence belongs to the WrbA family. FMN serves as cofactor.

Its subcellular location is the cell membrane. The enzyme catalyses a quinone + NADH + H(+) = a quinol + NAD(+). It catalyses the reaction a quinone + NADPH + H(+) = a quinol + NADP(+). Its function is as follows. Flavodoxin-like protein (FLP) that plays a role in cell wall integrity, oxidative stress protection and virulence. FLPs act as NAD(P)H quinone oxidoreductases. Reduces ubiquinone (coenzyme Q), enabling it to serve as an antioxidant in the membrane. The chain is NAD(P)H quinone oxidoreductase YCP4 from Candida albicans (strain SC5314 / ATCC MYA-2876) (Yeast).